A 161-amino-acid chain; its full sequence is Nucleotide-binding protein azo2183 (161 aa).

This sequence belongs to the YajQ family.

Functionally, nucleotide-binding protein. The sequence is that of Nucleotide-binding protein azo2183 from Azoarcus sp. (strain BH72).